Reading from the N-terminus, the 89-residue chain is uncharacterized protein (89 aa).

It to Synechocystis PCC 6803 slr1025.

This is an uncharacterized protein from Ureaplasma parvum serovar 3 (strain ATCC 700970).